Here is a 562-residue protein sequence, read N- to C-terminus: 3-(3-hydroxy-phenyl)propionate/3-hydroxycinnamic acid hydroxylase (562 aa).

FAD is bound by residues D8–E37 and F275–D285.

Belongs to the PheA/TfdB FAD monooxygenase family. It depends on FAD as a cofactor.

It carries out the reaction 3-(3-hydroxyphenyl)propanoate + NADH + O2 + H(+) = 3-(2,3-dihydroxyphenyl)propanoate + NAD(+) + H2O. It catalyses the reaction (2E)-3-(3-hydroxyphenyl)prop-2-enoate + NADH + O2 + H(+) = (2E)-3-(2,3-dihydroxyphenyl)prop-2-enoate + NAD(+) + H2O. It functions in the pathway aromatic compound metabolism; 3-phenylpropanoate degradation. Its function is as follows. Catalyzes the insertion of one atom of molecular oxygen into position 2 of the phenyl ring of 3-(3-hydroxyphenyl)propionate (3-HPP) and hydroxycinnamic acid (3HCI). This chain is 3-(3-hydroxy-phenyl)propionate/3-hydroxycinnamic acid hydroxylase, found in Mycolicibacterium smegmatis (strain ATCC 700084 / mc(2)155) (Mycobacterium smegmatis).